The primary structure comprises 85 residues: NADH-ubiquinone oxidoreductase chain 4L (85 aa).

The next 2 helical transmembrane spans lie at 21-41 (LLVT…LLVY) and 51-71 (FIFL…LVSL).

It belongs to the complex I subunit 4L family.

The protein localises to the mitochondrion membrane. It carries out the reaction a ubiquinone + NADH + 5 H(+)(in) = a ubiquinol + NAD(+) + 4 H(+)(out). Functionally, core subunit of the mitochondrial membrane respiratory chain NADH dehydrogenase (Complex I) that is believed to belong to the minimal assembly required for catalysis. Complex I functions in the transfer of electrons from NADH to the respiratory chain. The immediate electron acceptor for the enzyme is believed to be ubiquinone. The polypeptide is NADH-ubiquinone oxidoreductase chain 4L (ND4L) (Artemia franciscana (Brine shrimp)).